The following is a 121-amino-acid chain: NADH-quinone oxidoreductase subunit 7 (121 aa).

3 helical membrane-spanning segments follow: residues 11-31 (ILVFLGMASALAIVLILAAAV), 65-85 (LVSILFIIFDLEVAFLFPWAV), and 93-113 (VAFWGLMVFLAVLTVGFAYEW).

The protein belongs to the complex I subunit 3 family. NDH-1 is composed of at least 14 different subunits, Nqo1 to Nqo14. The complex has a L-shaped structure, with the hydrophobic arm (subunits Nqo7, Nqo8, Nqo10 to Nqo14) embedded in the inner membrane and the hydrophilic peripheral arm (subunits Nqo1 to Nqo6, Nqo9) protruding into the bacterial cytoplasm. The hydrophilic domain contains all the redox centers.

The protein localises to the cell inner membrane. It catalyses the reaction a quinone + NADH + 5 H(+)(in) = a quinol + NAD(+) + 4 H(+)(out). Functionally, NDH-1 shuttles electrons from NADH, via FMN and iron-sulfur (Fe-S) centers, to quinones in the respiratory chain. The immediate electron acceptor for the enzyme in this species is believed to be ubiquinone. Couples the redox reaction to proton translocation (for every two electrons transferred, four hydrogen ions are translocated across the cytoplasmic membrane), and thus conserves the redox energy in a proton gradient. In Paracoccus denitrificans, this protein is NADH-quinone oxidoreductase subunit 7 (nqo7).